The primary structure comprises 311 residues: Probable manganese-dependent inorganic pyrophosphatase (311 aa).

Mn(2+) is bound by residues His9, Asp13, Asp15, Asp77, His99, and Asp151.

Belongs to the PPase class C family. It depends on Mn(2+) as a cofactor.

The protein resides in the cytoplasm. The enzyme catalyses diphosphate + H2O = 2 phosphate + H(+). This chain is Probable manganese-dependent inorganic pyrophosphatase, found in Streptococcus agalactiae serotype Ia (strain ATCC 27591 / A909 / CDC SS700).